A 130-amino-acid polypeptide reads, in one-letter code: Small ribosomal subunit protein uS8 (130 aa).

Belongs to the universal ribosomal protein uS8 family. As to quaternary structure, part of the 30S ribosomal subunit.

In terms of biological role, one of the primary rRNA binding proteins, it binds directly to 16S rRNA central domain where it helps coordinate assembly of the platform of the 30S subunit. This is Small ribosomal subunit protein uS8 from Methanococcus vannielii (strain ATCC 35089 / DSM 1224 / JCM 13029 / OCM 148 / SB).